Consider the following 560-residue polypeptide: Cytosolic purine 5'-nucleotidase (560 aa).

Asp52 (nucleophile) is an active-site residue. Residues Asp52 and Asp54 each contribute to the IMP site. Mg(2+) contacts are provided by Asp52 and Asp54. The active-site Proton donor is Asp54. The ATP site is built by Arg144 and Asn154. 7 residues coordinate IMP: Arg202, Asp206, Lys215, Thr249, Asn250, Ser251, and Lys292. Asp351 provides a ligand contact to Mg(2+). Ser418 is modified (phosphoserine). The ATP site is built by Gln453 and Arg456. Ser502, Ser511, and Ser527 each carry phosphoserine. The tract at residues 541-560 (PQEITHCHDEDDDEEEEEEE) is disordered. A required for tetramer assembly region spans residues 548–560 (HDEDDDEEEEEEE). Over residues 550-560 (EDDDEEEEEEE) the composition is skewed to acidic residues.

Belongs to the 5'(3')-deoxyribonucleotidase family. In terms of assembly, homotetramer. Mg(2+) is required as a cofactor.

Its subcellular location is the cytoplasm. The protein localises to the cytosol. The catalysed reaction is a ribonucleoside 5'-phosphate + H2O = a ribonucleoside + phosphate. It catalyses the reaction a 2'-deoxyribonucleoside + a ribonucleoside 5'-phosphate = a ribonucleoside + a 2'-deoxyribonucleoside 5'-phosphate. The enzyme catalyses IMP + H2O = inosine + phosphate. It carries out the reaction GMP + H2O = guanosine + phosphate. The catalysed reaction is dIMP + H2O = 2'-deoxyinosine + phosphate. It catalyses the reaction dGMP + H2O = 2'-deoxyguanosine + phosphate. The enzyme catalyses XMP + H2O = xanthosine + phosphate. It carries out the reaction inosine + GMP = guanosine + IMP. The catalysed reaction is dGMP + inosine = 2'-deoxyguanosine + IMP. It catalyses the reaction dIMP + inosine = 2'-deoxyinosine + IMP. The enzyme catalyses inosine + UMP = uridine + IMP. It carries out the reaction inosine + CMP = cytidine + IMP. The catalysed reaction is inosine + AMP = IMP + adenosine. Allosterically activated by various compounds including ATP, 2,3-BPG/2,3-Bisphosphoglyceric acid and Ap4A/P1,P4-bis(5'-adenosyl) tetraphosphate. Binding of an allosteric activator is a prerequisiste to magnesium and substrate binding. Inhibited by inorganic phosphate. In terms of biological role, broad specificity cytosolic 5'-nucleotidase that catalyzes the dephosphorylation of 6-hydroxypurine nucleoside 5'-monophosphates. In addition, possesses a phosphotransferase activity by which it can transfer a phosphate from a donor nucleoside monophosphate to an acceptor nucleoside, preferably inosine, deoxyinosine and guanosine. Has the highest activities for IMP and GMP followed by dIMP, dGMP and XMP. Could also catalyze the transfer of phosphates from pyrimidine monophosphates but with lower efficiency. Through these activities regulates the purine nucleoside/nucleotide pools within the cell. The sequence is that of Cytosolic purine 5'-nucleotidase from Bos taurus (Bovine).